The following is a 616-amino-acid chain: Large ribosomal subunit assembly factor BipA (616 aa).

The 197-residue stretch at 8–204 folds into the tr-type G domain; the sequence is KKLRNIAIIA…AIVKHVEPPK (197 aa). GTP is bound by residues 20–25 and 134–137; these read DHGKTT and NKVD.

It belongs to the TRAFAC class translation factor GTPase superfamily. Classic translation factor GTPase family. BipA subfamily. As to quaternary structure, monomer.

It is found in the cytoplasm. It catalyses the reaction GTP + H2O = GDP + phosphate + H(+). A 50S ribosomal subunit assembly protein with GTPase activity, required for 50S subunit assembly at low temperatures, may also play a role in translation. Binds GTP and analogs. Binds the 70S ribosome between the 30S and 50S subunits, in a similar position as ribosome-bound EF-G; it contacts a number of ribosomal proteins, both rRNAs and the A-site tRNA. The protein is Large ribosomal subunit assembly factor BipA of Haemophilus influenzae (strain ATCC 51907 / DSM 11121 / KW20 / Rd).